The primary structure comprises 549 residues: Glucose-6-phosphate isomerase (549 aa).

Glu355 serves as the catalytic Proton donor. Catalysis depends on residues His387 and Lys515.

This sequence belongs to the GPI family.

Its subcellular location is the cytoplasm. The catalysed reaction is alpha-D-glucose 6-phosphate = beta-D-fructose 6-phosphate. It functions in the pathway carbohydrate biosynthesis; gluconeogenesis. It participates in carbohydrate degradation; glycolysis; D-glyceraldehyde 3-phosphate and glycerone phosphate from D-glucose: step 2/4. In terms of biological role, catalyzes the reversible isomerization of glucose-6-phosphate to fructose-6-phosphate. The sequence is that of Glucose-6-phosphate isomerase from Histophilus somni (strain 129Pt) (Haemophilus somnus).